The following is a 266-amino-acid chain: Interleukin-1 beta (266 aa).

Positions 1–113 are excised as a propeptide; that stretch reads MATVPEPINE…ETSSDELLCD (113 aa).

The protein belongs to the IL-1 family. As to quaternary structure, monomer. In its precursor form, weakly interacts with full-length MEFV; the mature cytokine does not interact at all. Interacts with integrins ITGAV:ITGBV and ITGA5:ITGB1; integrin-binding is required for IL1B signaling. Interacts with cargo receptor TMED10; the interaction is direct and is required for the secretion of IL1B mature form. Interacts with HSP90AB1; the interaction facilitates cargo translocation into the ERGIC. Interacts with HSP90B1; the interaction facilitates cargo translocation into the ERGIC.

It localises to the cytoplasm. The protein resides in the cytosol. The protein localises to the secreted. It is found in the lysosome. Its subcellular location is the extracellular exosome. In terms of biological role, potent pro-inflammatory cytokine. Initially discovered as the major endogenous pyrogen, induces prostaglandin synthesis, neutrophil influx and activation, T-cell activation and cytokine production, B-cell activation and antibody production, and fibroblast proliferation and collagen production. Promotes Th17 differentiation of T-cells. Synergizes with IL12/interleukin-12 to induce IFNG synthesis from T-helper 1 (Th1) cells. Plays a role in angiogenesis by inducing VEGF production synergistically with TNF and IL6. Involved in transduction of inflammation downstream of pyroptosis: its mature form is specifically released in the extracellular milieu by passing through the gasdermin-D (GSDMD) pore. In Ovis aries (Sheep), this protein is Interleukin-1 beta (IL1B).